The sequence spans 261 residues: Undecaprenyl-diphosphatase (261 aa).

A run of 7 helical transmembrane segments spans residues 38–58 (RSDFFNIVIQAGAILAITFVF), 75–95 (RDYVMKLATAFLITAVVGLAV), 106–126 (IQPIAWALIIGGIWILIAESV), 136–156 (VTWSVAIAVGLAQVVAGVFPG), 181–201 (FSFLVGIPTMFSASSYACFEL), 217–237 (VAFVAAMLTGFAVVKWLLGYI), and 241–261 (SFAPFAYYRIALGLVLLTWLT).

It belongs to the UppP family.

It localises to the cell inner membrane. The catalysed reaction is di-trans,octa-cis-undecaprenyl diphosphate + H2O = di-trans,octa-cis-undecaprenyl phosphate + phosphate + H(+). In terms of biological role, catalyzes the dephosphorylation of undecaprenyl diphosphate (UPP). Confers resistance to bacitracin. The polypeptide is Undecaprenyl-diphosphatase (Xylella fastidiosa (strain Temecula1 / ATCC 700964)).